We begin with the raw amino-acid sequence, 501 residues long: Aspartyl/glutamyl-tRNA(Asn/Gln) amidotransferase subunit B (501 aa).

This sequence belongs to the GatB/GatE family. GatB subfamily. Heterotrimer of A, B and C subunits.

It carries out the reaction L-glutamyl-tRNA(Gln) + L-glutamine + ATP + H2O = L-glutaminyl-tRNA(Gln) + L-glutamate + ADP + phosphate + H(+). It catalyses the reaction L-aspartyl-tRNA(Asn) + L-glutamine + ATP + H2O = L-asparaginyl-tRNA(Asn) + L-glutamate + ADP + phosphate + 2 H(+). In terms of biological role, allows the formation of correctly charged Asn-tRNA(Asn) or Gln-tRNA(Gln) through the transamidation of misacylated Asp-tRNA(Asn) or Glu-tRNA(Gln) in organisms which lack either or both of asparaginyl-tRNA or glutaminyl-tRNA synthetases. The reaction takes place in the presence of glutamine and ATP through an activated phospho-Asp-tRNA(Asn) or phospho-Glu-tRNA(Gln). The protein is Aspartyl/glutamyl-tRNA(Asn/Gln) amidotransferase subunit B of Mycobacterium sp. (strain KMS).